The sequence spans 695 residues: MSSKFNFSLRRKEKREFRNIAHGLIPAATIAPRPAVPRTPPPRSPNPSPERPRSALAAAILSSSLTGRTVAIPSPRQRSYSESDCSRADSQADFEPYATALYTRDRWPGSVTGRPPVPSPGRTDEDDDEDDEGNDIDELEGLEGDEDHVYQSLERQSRADDINVVYAVPLKHKKSEIDSDVDEETEDSAFDIVSPLQTEEETVVPEGAGQTQPSSLPQPRSVSRRSMASPELDDWSSPRSLKTSKRKSSRTNKESPVRVNERDRSSEDSEVLRSTLEVQHALVKELKEQNQILSQEKETLEKRCLQQSQHMKHLQQELCHTHRERGNSTGEGSELSSLRQQAQELVDENDGLKMTVHRLNVELSRYQARFRPLTKDENAQLKGLPVKGPAPPWLLDMKYLSPLLLAYEDHLNAKDKLLKSCEEELQSLRVRAEEVIQENEKLHTQVSKSSTVSNKEWRQLQEQARLVLEENQVLIEQLELQHAKAKEAHSKHAQEVCKVSKKVMLLEAEKQSLEKELEVERKEHRALKTEFQRVRLALEHSLSLAEHQTVTDKLKRQLQDHEKVKTCEVEDLQVRLSALEVERKTLLLDKTNLNTHIKHLETELQLSQQANRKAQRRVSVLKQQVEDSLEKELIAHQYLANIVTLAEKTTHERDQLMLMASTLEKDKQGVLTRIIESTVNLGKLQEKVKVFLLQS.

Disordered regions lie at residues 24-54, 66-147, and 167-272; these read LIPA…RPRS, TGRT…GDED, and AVPL…SEVL. Pro residues predominate over residues 34–49; the sequence is PAVPRTPPPRSPNPSP. Composition is skewed to acidic residues over residues 124 to 146 and 178 to 189; these read DEDD…EGDE and DSDVDEETEDSA. A compositionally biased stretch (polar residues) spans 209 to 226; sequence GQTQPSSLPQPRSVSRRS. Residues 251-271 are compositionally biased toward basic and acidic residues; that stretch reads TNKESPVRVNERDRSSEDSEV. Coiled-coil stretches lie at residues 276–368 and 406–632; these read LEVQ…RYQA and AYED…LEKE.

The protein localises to the cytoplasm. It is found in the cytosol. The protein resides in the cytoskeleton. Its subcellular location is the microtubule organizing center. It localises to the centrosome. The protein localises to the spindle pole. It is found in the centriole. The protein resides in the mitochondrion intermembrane space. In terms of biological role, required for ciliogenesis. Also plays a role in mitochondrial metabolism where it may modulate complex IV activity. The chain is Centrosomal protein of 89 kDa (cep89) from Danio rerio (Zebrafish).